Here is a 366-residue protein sequence, read N- to C-terminus: 3-dehydroquinate synthase (366 aa).

Residues 74–79 (SGEAAK), 108–112 (GVVGD), 132–133 (TT), lysine 144, lysine 153, and 171–174 (FLRT) each bind NAD(+). Zn(2+) is bound by residues glutamate 186, histidine 249, and histidine 266.

Belongs to the sugar phosphate cyclases superfamily. Dehydroquinate synthase family. Requires Co(2+) as cofactor. The cofactor is Zn(2+). It depends on NAD(+) as a cofactor.

It is found in the cytoplasm. The enzyme catalyses 7-phospho-2-dehydro-3-deoxy-D-arabino-heptonate = 3-dehydroquinate + phosphate. It participates in metabolic intermediate biosynthesis; chorismate biosynthesis; chorismate from D-erythrose 4-phosphate and phosphoenolpyruvate: step 2/7. Catalyzes the conversion of 3-deoxy-D-arabino-heptulosonate 7-phosphate (DAHP) to dehydroquinate (DHQ). This chain is 3-dehydroquinate synthase, found in Geobacillus thermodenitrificans (strain NG80-2).